A 180-amino-acid polypeptide reads, in one-letter code: ATP-dependent protease subunit HslV (180 aa).

Residue Thr7 is part of the active site. Positions 165, 168, and 171 each coordinate Na(+).

Belongs to the peptidase T1B family. HslV subfamily. In terms of assembly, a double ring-shaped homohexamer of HslV is capped on each side by a ring-shaped HslU homohexamer. The assembly of the HslU/HslV complex is dependent on binding of ATP.

It is found in the cytoplasm. It carries out the reaction ATP-dependent cleavage of peptide bonds with broad specificity.. Allosterically activated by HslU binding. Protease subunit of a proteasome-like degradation complex believed to be a general protein degrading machinery. The sequence is that of ATP-dependent protease subunit HslV from Geobacillus sp. (strain WCH70).